A 99-amino-acid polypeptide reads, in one-letter code: NADH-ubiquinone oxidoreductase chain 4L (99 aa).

A run of 3 helical transmembrane segments spans residues 4–24 (MFLMFYLSMIMFLFGCMVFVS), 29–49 (LLSTLLSLEYMVLSLFIFLFF), and 63–83 (FFLTFCVCEGVLGLSILVSMI).

The protein belongs to the complex I subunit 4L family.

It localises to the mitochondrion membrane. It carries out the reaction a ubiquinone + NADH + 5 H(+)(in) = a ubiquinol + NAD(+) + 4 H(+)(out). Its function is as follows. Core subunit of the mitochondrial membrane respiratory chain NADH dehydrogenase (Complex I) that is believed to belong to the minimal assembly required for catalysis. Complex I functions in the transfer of electrons from NADH to the respiratory chain. The immediate electron acceptor for the enzyme is believed to be ubiquinone. The protein is NADH-ubiquinone oxidoreductase chain 4L (ND4L) of Anopheles quadrimaculatus (Common malaria mosquito).